The chain runs to 444 residues: tRNA-2-methylthio-N(6)-dimethylallyladenosine synthase (444 aa).

Residues 2–119 form the MTTase N-terminal domain; the sequence is KKLYIRTFGC…LPSMLNEVLT (118 aa). 6 residues coordinate [4Fe-4S] cluster: cysteine 11, cysteine 48, cysteine 82, cysteine 161, cysteine 165, and cysteine 168. Residues 147 to 379 form the Radical SAM core domain; it reads KTSSVTAFVS…QKTIDKNTER (233 aa). The TRAM domain maps to 382 to 444; it reads KSMVGSVQKI…GNSLVGNLIA (63 aa).

This sequence belongs to the methylthiotransferase family. MiaB subfamily. Monomer. The cofactor is [4Fe-4S] cluster.

The protein localises to the cytoplasm. It catalyses the reaction N(6)-dimethylallyladenosine(37) in tRNA + (sulfur carrier)-SH + AH2 + 2 S-adenosyl-L-methionine = 2-methylsulfanyl-N(6)-dimethylallyladenosine(37) in tRNA + (sulfur carrier)-H + 5'-deoxyadenosine + L-methionine + A + S-adenosyl-L-homocysteine + 2 H(+). In terms of biological role, catalyzes the methylthiolation of N6-(dimethylallyl)adenosine (i(6)A), leading to the formation of 2-methylthio-N6-(dimethylallyl)adenosine (ms(2)i(6)A) at position 37 in tRNAs that read codons beginning with uridine. This chain is tRNA-2-methylthio-N(6)-dimethylallyladenosine synthase, found in Ruthia magnifica subsp. Calyptogena magnifica.